A 194-amino-acid chain; its full sequence is Xanthine phosphoribosyltransferase (194 aa).

Xanthine is bound by residues L20 and N27. 5-phospho-alpha-D-ribose 1-diphosphate is bound at residue 128–132 (ANGQA). Position 156 (K156) interacts with xanthine.

This sequence belongs to the purine/pyrimidine phosphoribosyltransferase family. Xpt subfamily. In terms of assembly, homodimer.

The protein resides in the cytoplasm. The catalysed reaction is XMP + diphosphate = xanthine + 5-phospho-alpha-D-ribose 1-diphosphate. The protein operates within purine metabolism; XMP biosynthesis via salvage pathway; XMP from xanthine: step 1/1. Its function is as follows. Converts the preformed base xanthine, a product of nucleic acid breakdown, to xanthosine 5'-monophosphate (XMP), so it can be reused for RNA or DNA synthesis. This is Xanthine phosphoribosyltransferase from Oceanobacillus iheyensis (strain DSM 14371 / CIP 107618 / JCM 11309 / KCTC 3954 / HTE831).